The following is a 138-amino-acid chain: Acidic phospholipase A2 CoaPLA2 (138 aa).

The first 16 residues, 1–16, serve as a signal peptide directing secretion; sequence MRTLWIVAVLLLGVEG. 7 disulfide bridges follow: Cys-42–Cys-131, Cys-44–Cys-60, Cys-59–Cys-111, Cys-65–Cys-138, Cys-66–Cys-104, Cys-73–Cys-97, and Cys-91–Cys-102. Residues Tyr-43, Gly-45, and Gly-47 each contribute to the Ca(2+) site. His-63 is a catalytic residue. Asp-64 serves as a coordination point for Ca(2+). Asp-105 is an active-site residue.

The protein belongs to the phospholipase A2 family. Group II subfamily. D49 sub-subfamily. As to quaternary structure, homodimer. Ca(2+) serves as cofactor. Expressed by the venom gland.

It is found in the secreted. It carries out the reaction a 1,2-diacyl-sn-glycero-3-phosphocholine + H2O = a 1-acyl-sn-glycero-3-phosphocholine + a fatty acid + H(+). Functionally, snake venom phospholipase A2 (PLA2) that shows very low inhibition of ADP-induced platelet aggregation in platelet-rich plasma of human, rabbit and guinea pig. Shows edema-inducing activity and myotoxicity. PLA2 catalyzes the calcium-dependent hydrolysis of the 2-acyl groups in 3-sn-phosphoglycerides. This Crotalus lutosus abyssus (Grand Canyon rattlesnake) protein is Acidic phospholipase A2 CoaPLA2.